Here is a 243-residue protein sequence, read N- to C-terminus: Ribonuclease 3 (243 aa).

In terms of domain architecture, RNase III spans 10–146; sequence VNRFRKRFDT…FIGALYLDQG (137 aa). Glutamate 59 serves as a coordination point for Mg(2+). Residue aspartate 63 is part of the active site. Mg(2+) is bound by residues aspartate 132 and glutamate 135. Glutamate 135 is an active-site residue. The DRBM domain maps to 172-241; that stretch reads DFKTQFQEYV…AKSAYKQLKQ (70 aa). Positions 219–231 are enriched in basic and acidic residues; it reads GKGKTKKESEQRA. Residues 219–243 form a disordered region; the sequence is GKGKTKKESEQRAAKSAYKQLKQIK.

This sequence belongs to the ribonuclease III family. In terms of assembly, homodimer. The cofactor is Mg(2+).

It localises to the cytoplasm. It catalyses the reaction Endonucleolytic cleavage to 5'-phosphomonoester.. In terms of biological role, digests double-stranded RNA. Involved in the processing of primary rRNA transcript to yield the immediate precursors to the large and small rRNAs (23S and 16S). Processes some mRNAs, and tRNAs when they are encoded in the rRNA operon. Processes pre-crRNA and tracrRNA of type II CRISPR loci if present in the organism. This chain is Ribonuclease 3, found in Staphylococcus aureus (strain Mu3 / ATCC 700698).